Here is a 372-residue protein sequence, read N- to C-terminus: GDP-mannose 4,6 dehydratase (372 aa).

A disordered region spans residues 1-20; that stretch reads MAHAPARCPSARGSGDGEMG. The residue at position 2 (Ala-2) is an N-acetylalanine. Residues 30–35, 55–58, 86–87, 108–112, and Tyr-123 contribute to the NADP(+) site; these read GITGQD, RRSS, DL, and LGAQS. Residue Thr-155 is part of the active site. Active-site nucleophile residues include Glu-157 and Tyr-179. NADP(+) contacts are provided by Lys-183, His-209, and Arg-214. The residue at position 323 (Tyr-323) is a Phosphotyrosine.

The protein belongs to the NAD(P)-dependent epimerase/dehydratase family. GDP-mannose 4,6-dehydratase subfamily. NADP(+) serves as cofactor. Highly expressed in pancreas and small intestine. Expressed in thymus, protstate, colon, heart, placenta, liver and kidney. Expressed at low levels in spleen, testis, brain and lung.

It catalyses the reaction GDP-alpha-D-mannose = GDP-4-dehydro-alpha-D-rhamnose + H2O. It functions in the pathway nucleotide-sugar biosynthesis; GDP-L-fucose biosynthesis via de novo pathway; GDP-L-fucose from GDP-alpha-D-mannose: step 1/2. With respect to regulation, inhibited by GDP-fucose. Functionally, catalyzes the conversion of GDP-D-mannose to GDP-4-dehydro-6-deoxy-D-mannose. The sequence is that of GDP-mannose 4,6 dehydratase from Homo sapiens (Human).